The sequence spans 181 residues: Large ribosomal subunit protein uL5 (181 aa).

This sequence belongs to the universal ribosomal protein uL5 family. As to quaternary structure, part of the 50S ribosomal subunit; part of the 5S rRNA/L5/L18/L25 subcomplex. Contacts the 5S rRNA and the P site tRNA. Forms a bridge to the 30S subunit in the 70S ribosome.

This is one of the proteins that bind and probably mediate the attachment of the 5S RNA into the large ribosomal subunit, where it forms part of the central protuberance. In the 70S ribosome it contacts protein S13 of the 30S subunit (bridge B1b), connecting the 2 subunits; this bridge is implicated in subunit movement. Contacts the P site tRNA; the 5S rRNA and some of its associated proteins might help stabilize positioning of ribosome-bound tRNAs. The sequence is that of Large ribosomal subunit protein uL5 from Clostridium kluyveri (strain NBRC 12016).